The primary structure comprises 430 residues: MSQLRATKSGLVVRAVICIFIFLYLRNPTPAESEEEPAQPEVVECGFYPDELCSALFEGKGAAPQIAKFCKTPHKSEIHAHLHTPGNCSRISRGLHFITRPLSAEEGDFSLAYIITIHKELAMFVQLLRAIYVPQNVYCIHVDEKAPMKYKTAVQTLVNCFENVFISSKTEKVAYAGFTRLQADINCMKVLVHSKFQWNYVINLCGQDFPIKTNREIIHYIRSKWSDKNITPGVIQPLHIKSKTSQSHLEFVPKGSIYAPPNNRFKDKPPHNLTIYFGSAYYVLTRKFVEFILTDIHAKDMLQWSKDIRSPEQHYWVTLNRLKDAPGATPNAGWEGNVRAIKRKSEEGNVHDGCKGRYVEDICVYGPGDLPWLIQSPSLFANKFEPSTDPLVVTCLERRHRLQVLRQAEVPIEPHWHFQQQSHFNMRLNR.

The Cytoplasmic portion of the chain corresponds to 1-8 (MSQLRATK). Residues 9–25 (SGLVVRAVICIFIFLYL) form a helical; Signal-anchor for type II membrane protein membrane-spanning segment. Residues 26 to 430 (RNPTPAESEE…QSHFNMRLNR (405 aa)) are Extracellular-facing. 4 disulfide bridges follow: Cys-53–Cys-205, Cys-139–Cys-354, Cys-160–Cys-187, and Cys-363–Cys-395. N-linked (GlcNAc...) asparagine glycosylation occurs at Asn-87. N-linked (GlcNAc...) asparagine glycosylation occurs at Asn-272.

The protein belongs to the glycosyltransferase 14 family.

It is found in the golgi apparatus membrane. It functions in the pathway protein modification; protein glycosylation. Functionally, probable glycosyltransferase. The protein is Probable beta-1,3-galactosyl-O-glycosyl-glycoprotein beta-1,6-N-acetylglucosaminyltransferase 7 of Homo sapiens (Human).